The primary structure comprises 731 residues: Actin filament-associated protein 1 (731 aa).

Methionine 1 carries the N-acetylmethionine modification. Residues 56 to 90 are disordered; the sequence is NNLPAPPQMPLPEIPQPWLPPDSGPPPLPTSSLPE. Pro residues predominate over residues 59 to 84; it reads PAPPQMPLPEIPQPWLPPDSGPPPLP. Residues 70 to 73 carry the SH3-binding motif; it reads PQPW. The SH2-binding 1 motif lies at 93-96; the sequence is YEEA. A disordered region spans residues 118 to 139; it reads SSSYESYDEEEEDGKGKKTRHQ. The region spanning 152–248 is the PH 1 domain; that stretch reads DAKICAFLLR…WLKVIKEAYS (97 aa). The tract at residues 252 to 318 is disordered; the sequence is GPVDPECSPP…SKSEAKGTVS (67 aa). The segment covering 271 to 284 has biased composition (basic and acidic residues); it reads AELEKKLSSERPSS. Serine 283 and serine 284 each carry phosphoserine. Residues 348–442 enclose the PH 2 domain; sequence DVPTCGYLNV…WIGILLAETG (95 aa). The SH2-binding 2 motif lies at 452-457; the sequence is YDYIDV. The tract at residues 513–544 is disordered; it reads KNKKPPASSNGVPVKGKAPSSQQKKVETAGGV. Position 549 is a phosphoserine (serine 549). Residues 558–649 adopt a coiled-coil conformation; sequence KNRVEADAKR…VKESLKKALA (92 aa). The interval 595-638 is interaction with F-actin; the sequence is DLRAAIEVNAGRKTQAALEDKLKRLEEECKQREAERVSLELELT. Residues 658-731 form a disordered region; that stretch reads IEPRSGTSSP…AKEWELKNGT (74 aa). Phosphoserine is present on residues serine 665, serine 666, and serine 669. Threonine 676 carries the post-translational modification Phosphothreonine. Residues 678–687 are compositionally biased toward polar residues; sequence ENSPISSCDT. Phosphoserine occurs at positions 680 and 688. Residues 721–731 show a composition bias toward basic and acidic residues; it reads KAKEWELKNGT.

As to quaternary structure, monomer and homomultimer. Interacts via its C-terminus with F-actin; probably involving AFAP1 multimers. Interacts with activated SRC SH3-SH2 domains. Interacts via its PH 1 domain with PRKCA, PRKCB and PRKCI. In terms of processing, phosphorylated on tyrosine residues by SRC.

Its subcellular location is the cytoplasm. The protein localises to the cytoskeleton. It is found in the stress fiber. Functionally, can cross-link actin filaments into both network and bundle structures. May modulate changes in actin filament integrity and induce lamellipodia formation. May function as an adapter molecule that links other proteins, such as SRC and PKC to the actin cytoskeleton. The sequence is that of Actin filament-associated protein 1 (Afap1) from Mus musculus (Mouse).